The sequence spans 397 residues: Elongation factor Tu (397 aa).

In terms of domain architecture, tr-type G spans 10–206; the sequence is KPHVNIGTIG…AVDQNIPEPQ (197 aa). The tract at residues 19–26 is G1; sequence GHIDHGKT. Residue 19-26 participates in GTP binding; that stretch reads GHIDHGKT. T26 contacts Mg(2+). A G2 region spans residues 62-66; it reads GITIS. Positions 83–86 are G3; the sequence is DCPG. GTP is bound by residues 83–87 and 138–141; these read DCPGH and NKSD. The segment at 138-141 is G4; sequence NKSD. Positions 176–178 are G5; it reads SAL.

This sequence belongs to the TRAFAC class translation factor GTPase superfamily. Classic translation factor GTPase family. EF-Tu/EF-1A subfamily. As to quaternary structure, monomer.

It is found in the cytoplasm. The catalysed reaction is GTP + H2O = GDP + phosphate + H(+). Its function is as follows. GTP hydrolase that promotes the GTP-dependent binding of aminoacyl-tRNA to the A-site of ribosomes during protein biosynthesis. This is Elongation factor Tu from Thermobifida fusca (strain YX).